The chain runs to 243 residues: Leucyl/phenylalanyl-tRNA--protein transferase (243 aa).

This sequence belongs to the L/F-transferase family.

The protein resides in the cytoplasm. The catalysed reaction is N-terminal L-lysyl-[protein] + L-leucyl-tRNA(Leu) = N-terminal L-leucyl-L-lysyl-[protein] + tRNA(Leu) + H(+). It catalyses the reaction N-terminal L-arginyl-[protein] + L-leucyl-tRNA(Leu) = N-terminal L-leucyl-L-arginyl-[protein] + tRNA(Leu) + H(+). The enzyme catalyses L-phenylalanyl-tRNA(Phe) + an N-terminal L-alpha-aminoacyl-[protein] = an N-terminal L-phenylalanyl-L-alpha-aminoacyl-[protein] + tRNA(Phe). Its function is as follows. Functions in the N-end rule pathway of protein degradation where it conjugates Leu, Phe and, less efficiently, Met from aminoacyl-tRNAs to the N-termini of proteins containing an N-terminal arginine or lysine. The sequence is that of Leucyl/phenylalanyl-tRNA--protein transferase from Vibrio cholerae serotype O1 (strain ATCC 39315 / El Tor Inaba N16961).